The sequence spans 314 residues: Testis-specific Y-encoded protein 4 (314 aa).

The protein belongs to the nucleosome assembly protein (NAP) family.

It is found in the cytoplasm. It localises to the nucleus. May be involved in sperm differentiation and proliferation. The polypeptide is Testis-specific Y-encoded protein 4 (TSPY4) (Homo sapiens (Human)).